Reading from the N-terminus, the 414-residue chain is NADH-dependent flavin oxidoreductase iccE (414 aa).

Residues 25–28 and glutamine 107 contribute to the FMN site; that span reads TAIA. Residue 188 to 191 coordinates substrate; it reads HASH. Residue 347–348 participates in FMN binding; that stretch reads AR.

Belongs to the NADH:flavin oxidoreductase/NADH oxidase family.

The catalysed reaction is 8-epi-ilicicolin H = ilicicolin H. Its pathway is mycotoxin biosynthesis. NADH-dependent flavin oxidoreductase; part of the gene cluster that mediates the biosynthesis of ilicicolin H, a 4-hydroxy-2-pyridonealkaloid that has potent and broad antifungal activities by inhibiting the mitochondrial respiration chain. IccE acts as an epimerase and catalyzes the conversion of 8-epi-ilicicolin H into the final product ilicicolin H. The biosynthesis of ilicicolin H starts with formation of the tetramic acid by the hybrid PKS-NRPS synthetase iccA with the partnering trans-enoyl reductase iccB since iccA lacks a designated enoylreductase (ER) domain. The cytochrome P450 monooxygenase iccC then catalyzes the ring expansion of the tetramate to the acyclic 2-pyridone. The pericyclase iccD further converts the acyclic 2-pyridone into 8-epi-ilicicolin H. Finally, the epimerase iccE converts 8-epi-ilicicolin H into ilicicolin H via epimerization. IccA to iccE are sufficient for ilicicolin H biosynthesis and the roles of the remaining enzymes, iccF, iccG and iccH within the pathway have still to be determined. The chain is NADH-dependent flavin oxidoreductase iccE from Talaromyces variabilis (Penicillium variabile).